The chain runs to 293 residues: MPEGKIVKALSGFYYVQHEEGITQCRGRGVFRKNKITPLVGDQVVFQADNPSEGYVLEVFDRKNELVRPPIANVDQAILVFSAVEPDFNPGLLDRFLVLIEYHNIKPIICISKMDLVDEKMRETVEAYANDYREMGYDVLFTSINTSESIDILKPFLEGCVSVVAGQSGVGKSSMLNVLRPELELKTNDISSHLGRGKHTTRHVELIAIGSGLVADTPGFSSLDFIDIEVEDLTYCFPELKEASQYCKFRGCTHLSEPKCAVKAAVEEGKITEYRYKNYKQFVEEIRERKPRY.

A CP-type G domain is found at 63-223 (KNELVRPPIA…VADTPGFSSL (161 aa)). Residues 112–115 (SKMD) and 166–174 (GQSGVGKSS) each bind GTP. The Zn(2+) site is built by Cys-247, Cys-252, His-254, and Cys-260.

Belongs to the TRAFAC class YlqF/YawG GTPase family. RsgA subfamily. As to quaternary structure, monomer. Associates with 30S ribosomal subunit, binds 16S rRNA. It depends on Zn(2+) as a cofactor.

It is found in the cytoplasm. In terms of biological role, one of several proteins that assist in the late maturation steps of the functional core of the 30S ribosomal subunit. Helps release RbfA from mature subunits. May play a role in the assembly of ribosomal proteins into the subunit. Circularly permuted GTPase that catalyzes slow GTP hydrolysis, GTPase activity is stimulated by the 30S ribosomal subunit. This chain is Small ribosomal subunit biogenesis GTPase RsgA, found in Bacillus anthracis.